The primary structure comprises 115 residues: ATP-dependent Clp protease adapter protein ClpS (115 aa).

The protein belongs to the ClpS family. As to quaternary structure, binds to the N-terminal domain of the chaperone ClpA.

Functionally, involved in the modulation of the specificity of the ClpAP-mediated ATP-dependent protein degradation. The sequence is that of ATP-dependent Clp protease adapter protein ClpS from Leptothrix cholodnii (strain ATCC 51168 / LMG 8142 / SP-6) (Leptothrix discophora (strain SP-6)).